The following is a 301-amino-acid chain: Sulfate adenylyltransferase subunit 2 (301 aa).

The disordered stretch occupies residues 282 to 301 (RLIDRDEAGSMEKKKREGYF).

This sequence belongs to the PAPS reductase family. CysD subfamily. Heterodimer composed of CysD, the smaller subunit, and CysN.

It carries out the reaction sulfate + ATP + H(+) = adenosine 5'-phosphosulfate + diphosphate. Its pathway is sulfur metabolism; hydrogen sulfide biosynthesis; sulfite from sulfate: step 1/3. In terms of biological role, with CysN forms the ATP sulfurylase (ATPS) that catalyzes the adenylation of sulfate producing adenosine 5'-phosphosulfate (APS) and diphosphate, the first enzymatic step in sulfur assimilation pathway. APS synthesis involves the formation of a high-energy phosphoric-sulfuric acid anhydride bond driven by GTP hydrolysis by CysN coupled to ATP hydrolysis by CysD. This is Sulfate adenylyltransferase subunit 2 from Chelativorans sp. (strain BNC1).